The chain runs to 573 residues: PCNA-interacting partner (573 aa).

A disordered region spans residues valine 463–arginine 511. The span at alanine 474–proline 494 shows a compositional bias: basic and acidic residues. Positions arginine 495 to lysine 504 are enriched in basic residues.

This sequence belongs to the PARI family. Interacts with RAD51 and PCNA. Interacts with PARP1. Interacts with TASOR. In terms of tissue distribution, present in testis (at protein level). Expressed in testis, gastrointestinal tract (jejunum, ileum, and colon) and immune system (thymus and spleen). Weakly expressed in lung, kidney, pituitary gland and muscle.

It is found in the cytoplasm. The protein resides in the nucleus. Required to suppress inappropriate homologous recombination, thereby playing a central role DNA repair and in the maintenance of genomic stability. Antagonizes homologous recombination by interfering with the formation of the RAD51-DNA homologous recombination structure. Positively regulate the poly(ADP-ribosyl)ation activity of PARP1; however such function may be indirect. Binds single-strand DNA and poly(A) homopolymers. This chain is PCNA-interacting partner (Parpbp), found in Rattus norvegicus (Rat).